A 361-amino-acid polypeptide reads, in one-letter code: Phospho-N-acetylmuramoyl-pentapeptide-transferase (361 aa).

A run of 10 helical transmembrane segments spans residues 28 to 48, 74 to 94, 99 to 119, 133 to 153, 168 to 188, 203 to 223, 236 to 256, 263 to 283, 288 to 308, and 338 to 358; these read LAII…IKFL, TMGG…LADL, IWIT…DDYA, SKLV…EYLD, LNLD…VGSS, VPIA…GNLI, TGEL…FLWF, VFMG…ISVI, IVLA…ILQV, and KVVI…LSSL.

Belongs to the glycosyltransferase 4 family. MraY subfamily. Mg(2+) is required as a cofactor.

The protein resides in the cell inner membrane. It catalyses the reaction UDP-N-acetyl-alpha-D-muramoyl-L-alanyl-gamma-D-glutamyl-meso-2,6-diaminopimeloyl-D-alanyl-D-alanine + di-trans,octa-cis-undecaprenyl phosphate = di-trans,octa-cis-undecaprenyl diphospho-N-acetyl-alpha-D-muramoyl-L-alanyl-D-glutamyl-meso-2,6-diaminopimeloyl-D-alanyl-D-alanine + UMP. Its pathway is cell wall biogenesis; peptidoglycan biosynthesis. In terms of biological role, catalyzes the initial step of the lipid cycle reactions in the biosynthesis of the cell wall peptidoglycan: transfers peptidoglycan precursor phospho-MurNAc-pentapeptide from UDP-MurNAc-pentapeptide onto the lipid carrier undecaprenyl phosphate, yielding undecaprenyl-pyrophosphoryl-MurNAc-pentapeptide, known as lipid I. This Rickettsia akari (strain Hartford) protein is Phospho-N-acetylmuramoyl-pentapeptide-transferase.